Here is a 605-residue protein sequence, read N- to C-terminus: Phosphoenolpyruvate carboxykinase (ATP) (605 aa).

Positions 27–48 (SGPSSSFINNNNSNNNNNKSSN) are enriched in low complexity. Positions 27-67 (SGPSSSFINNNNSNNNNNKSSNMFNHDHVNKTNLHPGGVKP) are disordered. 307–314 (GLSGTGKT) contributes to the ATP binding site.

This sequence belongs to the phosphoenolpyruvate carboxykinase (ATP) family.

It catalyses the reaction oxaloacetate + ATP = phosphoenolpyruvate + ADP + CO2. It participates in carbohydrate biosynthesis; gluconeogenesis. In Neurospora crassa (strain ATCC 24698 / 74-OR23-1A / CBS 708.71 / DSM 1257 / FGSC 987), this protein is Phosphoenolpyruvate carboxykinase (ATP) (acu-6).